The chain runs to 465 residues: Cysteine--tRNA ligase (465 aa).

C30 provides a ligand contact to Zn(2+). The short motif at I32–H42 is the 'HIGH' region element. Zn(2+) is bound by residues C214, H239, and E243. A 'KMSKS' region motif is present at residues K271–S275. K274 serves as a coordination point for ATP.

The protein belongs to the class-I aminoacyl-tRNA synthetase family. Monomer. Zn(2+) serves as cofactor.

The protein localises to the cytoplasm. It carries out the reaction tRNA(Cys) + L-cysteine + ATP = L-cysteinyl-tRNA(Cys) + AMP + diphosphate. In Burkholderia ambifaria (strain MC40-6), this protein is Cysteine--tRNA ligase.